A 416-amino-acid chain; its full sequence is Serine hydroxymethyltransferase (416 aa).

Residues Leu-121 and 125-127 contribute to the (6S)-5,6,7,8-tetrahydrofolate site; that span reads GHL. Lys-229 is subject to N6-(pyridoxal phosphate)lysine.

This sequence belongs to the SHMT family. In terms of assembly, homodimer. The cofactor is pyridoxal 5'-phosphate.

The protein resides in the cytoplasm. It catalyses the reaction (6R)-5,10-methylene-5,6,7,8-tetrahydrofolate + glycine + H2O = (6S)-5,6,7,8-tetrahydrofolate + L-serine. The protein operates within one-carbon metabolism; tetrahydrofolate interconversion. It participates in amino-acid biosynthesis; glycine biosynthesis; glycine from L-serine: step 1/1. Catalyzes the reversible interconversion of serine and glycine with tetrahydrofolate (THF) serving as the one-carbon carrier. This reaction serves as the major source of one-carbon groups required for the biosynthesis of purines, thymidylate, methionine, and other important biomolecules. Also exhibits THF-independent aldolase activity toward beta-hydroxyamino acids, producing glycine and aldehydes, via a retro-aldol mechanism. The protein is Serine hydroxymethyltransferase of Neisseria meningitidis serogroup C (strain 053442).